Consider the following 240-residue polypeptide: Fimbriae Y protein (240 aa).

The protein resides in the fimbrium. The polypeptide is Fimbriae Y protein (fimY) (Salmonella typhimurium (strain LT2 / SGSC1412 / ATCC 700720)).